A 356-amino-acid polypeptide reads, in one-letter code: DNA polymerase IV (356 aa).

Residues 7-188 enclose the UmuC domain; it reads IIHIDMDAFY…IPVTKFYGVG (182 aa). Positions 11 and 106 each coordinate Mg(2+). Glutamate 107 is a catalytic residue.

Belongs to the DNA polymerase type-Y family. In terms of assembly, monomer. Requires Mg(2+) as cofactor.

The protein resides in the cytoplasm. It carries out the reaction DNA(n) + a 2'-deoxyribonucleoside 5'-triphosphate = DNA(n+1) + diphosphate. Functionally, poorly processive, error-prone DNA polymerase involved in untargeted mutagenesis. Copies undamaged DNA at stalled replication forks, which arise in vivo from mismatched or misaligned primer ends. These misaligned primers can be extended by PolIV. Exhibits no 3'-5' exonuclease (proofreading) activity. May be involved in translesional synthesis, in conjunction with the beta clamp from PolIII. This chain is DNA polymerase IV, found in Listeria monocytogenes serotype 4a (strain HCC23).